Here is a 194-residue protein sequence, read N- to C-terminus: Ribosomal RNA small subunit methyltransferase G (194 aa).

S-adenosyl-L-methionine is bound by residues G70, Y75, 121–122, and R135; that span reads VE.

It belongs to the methyltransferase superfamily. RNA methyltransferase RsmG family.

Its subcellular location is the cytoplasm. The catalysed reaction is guanosine(527) in 16S rRNA + S-adenosyl-L-methionine = N(7)-methylguanosine(527) in 16S rRNA + S-adenosyl-L-homocysteine. Its function is as follows. Specifically methylates the N7 position of guanine in position 527 of 16S rRNA. The sequence is that of Ribosomal RNA small subunit methyltransferase G from Aliarcobacter butzleri (strain RM4018) (Arcobacter butzleri).